The primary structure comprises 741 residues: Aspartyl/asparaginyl beta-hydroxylase (741 aa).

The tract at residues 1-54 is disordered; it reads MAPRKNAKGGGGNSSSSGSGSGSGSGSPSTGSSGSSSSPGARREAKHGGHKNGR. Residues 1–62 lie on the Cytoplasmic side of the membrane; sequence MAPRKNAKGG…GRRGGISGGS (62 aa). Gly residues predominate over residues 8–25; it reads KGGGGNSSSSGSGSGSGS. The residue at position 15 (serine 15) is a Phosphoserine. The span at 26–40 shows a compositional bias: low complexity; that stretch reads GSPSTGSSGSSSSPG. Residues 63 to 83 form a helical; Signal-anchor for type II membrane protein membrane-spanning segment; sequence FFTWFMVIALLGVWTSVAVVW. Over 84-741 the chain is Lumenal; it reads FDLVDYEEVL…PQQRRSLPAI (658 aa). Ca(2+) contacts are provided by aspartate 100, aspartate 102, aspartate 104, aspartate 106, and aspartate 111. Disordered regions lie at residues 120-141 and 222-244; these read ERSP…AELE and TASQ…SDPS. Positions 231–242 are enriched in acidic residues; the sequence is MEEMTNEQENSD. TPR repeat units follow at residues 324–357, 365–398, 437–470, 472–504, and 508–540; these read IKAE…YPQS, AQCE…PDAP, TTLK…TPND, FAKV…GDPG, and GRFY…GHFA. An N-linked (GlcNAc...) asparagine glycan is attached at asparagine 453. 2-oxoglutarate is bound at residue tryptophan 608. Cysteine 624 and cysteine 631 are joined by a disulfide. Serine 651 contacts 2-oxoglutarate. Residue histidine 662 coordinates Fe cation. Position 671–673 (671–673) interacts with 2-oxoglutarate; sequence RMH. An N-linked (GlcNAc...) asparagine glycan is attached at asparagine 689. Histidine 708 serves as a coordination point for Fe cation. Arginine 718 contacts 2-oxoglutarate.

The protein belongs to the aspartyl/asparaginyl beta-hydroxylase family. In terms of assembly, monomer. Isoform 2 interacts with CASQ2. Fe cation serves as cofactor. As to expression, isoform 1 is detected in heart, liver and ovary (at protein level). Detected in heart ventricle. Isoform 1 is widely expressed. Isoform 2 is detected in heart and skeletal muscle.

Its subcellular location is the endoplasmic reticulum membrane. The protein localises to the sarcoplasmic reticulum membrane. The enzyme catalyses L-aspartyl-[protein] + 2-oxoglutarate + O2 = 3-hydroxy-L-aspartyl-[protein] + succinate + CO2. In terms of biological role, specifically hydroxylates an Asp or Asn residue in certain epidermal growth factor-like (EGF) domains of a number of proteins. This is Aspartyl/asparaginyl beta-hydroxylase (Asph) from Mus musculus (Mouse).